The chain runs to 704 residues: Polyribonucleotide nucleotidyltransferase (704 aa).

Residues Asp488 and Asp494 each contribute to the Mg(2+) site. The region spanning 555 to 614 (PRITTIKINPEKIRDVIGKGGATIRALTEETGTTIELDDDGTVKIASSNGEATKEAIRRI) is the KH domain. An S1 motif domain is found at 624–692 (GTVYNGKVVR…RQGRVRLSMK (69 aa)).

It belongs to the polyribonucleotide nucleotidyltransferase family. As to quaternary structure, component of the RNA degradosome, which is a multiprotein complex involved in RNA processing and mRNA degradation. Requires Mg(2+) as cofactor.

Its subcellular location is the cytoplasm. It carries out the reaction RNA(n+1) + phosphate = RNA(n) + a ribonucleoside 5'-diphosphate. Functionally, involved in mRNA degradation. Catalyzes the phosphorolysis of single-stranded polyribonucleotides processively in the 3'- to 5'-direction. This is Polyribonucleotide nucleotidyltransferase from Shewanella halifaxensis (strain HAW-EB4).